The following is a 4218-amino-acid chain: Protein Obscurin (4218 aa).

In terms of domain architecture, SH3 spans 3-71; the sequence is AVADIVFVSR…PIDILEFNPT (69 aa). Positions 86-264 constitute a DH domain; it reads RKLTILRELV…LSVPSRAYDN (179 aa). Positions 439 to 466 form a coiled coil; that stretch reads SKETKERLQHEQQELLKLEQEAIELYKK. 4 disordered regions span residues 465-592, 684-703, 728-750, and 923-1010; these read KKQQ…SHSK, SLRD…QQGY, SGAN…NFTR, and RYET…EDRP. Composition is skewed to low complexity over residues 466–490 and 505–517; these read KQQS…VKSS and AQVK…KVVS. Residues 578 to 592 show a composition bias toward basic and acidic residues; sequence KEVRKEVPPSASHSK. The segment covering 923-935 has biased composition (basic and acidic residues); the sequence is RYETKTRDYDRGT. Positions 936-948 are enriched in polar residues; sequence SYDSTVERSQYGI. Composition is skewed to basic and acidic residues over residues 950 to 962 and 972 to 986; these read SRRD…KVEA and TESR…RAES. Low complexity predominate over residues 987 to 996; the sequence is RASYSVAESR. 15 Ig-like C2-type domains span residues 1017–1103, 1152–1298, 1313–1400, 1504–1594, 1599–1689, 1694–1785, 1815–1906, 2018–2107, 2113–2214, 2220–2305, 2318–2409, 2415–2505, 2519–2609, 2614–2698, and 2716–2792; these read PVVV…TTVS, PRVK…AELS, PTLV…SSIN, PVIV…TQLL, PEFT…CVVT, PKVK…CKVA, PEIV…LSLS, PEIS…FNLA, PTFI…FKLA, PSFV…EKVA, PKFL…VEIV, PVFV…AKLY, PQFV…ANVR, PPVF…KDIT, and PPVF…SCRI. C1199 and C1282 are disulfide-bonded. Residues C2739 and C2790 are joined by a disulfide bond. The region spanning 2832-2933 is the Fibronectin type-III 1 domain; that stretch reads APPPLSEGPI…TYRQKLVPDP (102 aa). The Protein kinase 1 domain maps to 3186–3440; it reads YDIGDELGRG…VKTALKHPWF (255 aa). Positions 3198, 3215, 3260, 3262, 3266, 3310, and 3326 each coordinate ATP. The Ig-like C2-type 16 domain occupies 3654-3738; the sequence is PFFREKPQTI…ARNKVGQTVA (85 aa). The Fibronectin type-III 2 domain occupies 3750 to 3843; sequence APDSPEISAN…IPVSASTVGG (94 aa). One can recognise a Protein kinase 2 domain in the interval 3897-4151; sequence YSFISEIARG…TEDCLEHRWL (255 aa).

Belongs to the protein kinase superfamily. CAMK Ser/Thr protein kinase family. As to quaternary structure, interacts with myosin. May interact (via protein kinase domain 1) with ball. May interact (via protein kinase domain 1 or 2) with mask. May interact (via protein kinase domain 2) with Tm1/tropomyosin-1. As to expression, expressed in the thoracic muscles including the indirect flight muscles (IFM) (at protein level).

The protein localises to the cytoplasm. Its subcellular location is the myofibril. It localises to the sarcomere. It is found in the m line. Its function is as follows. Structural component of the muscle M line which is involved in assembly and organization of sarcomere. Required for the development and organization of indirect flight muscle sarcomeres by regulating the formation of M line and H zone and the correct assembly of thick and thin filaments in the sarcomere. Lacks serine/threonine-protein kinase activity. The chain is Protein Obscurin from Drosophila melanogaster (Fruit fly).